Reading from the N-terminus, the 615-residue chain is Kelch-like protein 26 (615 aa).

The span at 1–21 (MAESGGSSGGAGGGGAFGAGP) shows a compositional bias: gly residues. The disordered stretch occupies residues 1-35 (MAESGGSSGGAGGGGAFGAGPGPERPNSTADKNGA). Position 2 is an N-acetylalanine (Ala-2). Residues 63 to 130 (LDVVLTINRE…AYSAEVTLDL (68 aa)) form the BTB domain. The region spanning 165 to 266 (CLNIGQMATT…QSSELVDSVQ (102 aa)) is the BACK domain. Kelch repeat units follow at residues 310 to 361 (SLVT…VLDN), 362 to 413 (FVYV…VLCG), 414 to 460 (MVYA…ASGG), 461 to 508 (RLYI…GAGG), 510 to 559 (IYAL…LLER), and 561 to 608 (IYIV…PVLL).

Its function is as follows. May play a role in endo(sarco)plasmic reticulum (ER/SR) mitochondrial signaling. May be part of the ubiquitin-proteasome system (UPS) and affect ubiquitination and degradation of target substrates in cardiomyocytes. The sequence is that of Kelch-like protein 26 (KLHL26) from Homo sapiens (Human).